We begin with the raw amino-acid sequence, 244 residues long: uncharacterized protein (244 aa).

The HTH gntR-type domain occupies 7-74; that stretch reads VKEKDQVVAH…YHRGAFIERF (68 aa). The segment at residues 34–53 is a DNA-binding region (H-T-H motif); that stretch reads RNEIAHGLGVSRVPIQEALV.

This is an uncharacterized protein from Mycobacterium tuberculosis (strain CDC 1551 / Oshkosh).